We begin with the raw amino-acid sequence, 701 residues long: Ubiquitin thioesterase zranb1 (701 aa).

The segment at 3–33 (EHGIKWACEYCTYENWPSAIKCTMCRAPRPS) adopts a RanBP2-type 1 zinc-finger fold. Zn(2+)-binding residues include Cys10, Cys13, Cys24, and Cys27. A disordered region spans residues 38-59 (TEEPFKNSTPDVGSMERESGSP). The segment at 79–108 (TSTKWSCHMCTYLNWPRAIRCTQCLSQRRT) adopts a RanBP2-type 2 zinc-finger fold. Residues Cys85, Cys88, Cys99, and Cys102 each contribute to the Zn(2+) site. The segment at 108-129 (TRSPTESPQSSGSSLRAIPSPI) is disordered. Residues 111-121 (PTESPQSSGSS) are compositionally biased toward low complexity. The segment at 143–173 (IKGQHWTCSACTYENCAKAKKCVVCDHPTPN) adopts a RanBP2-type 3 zinc-finger fold. Positions 150, 153, 164, and 167 each coordinate Zn(2+). Positions 198–220 (WRGGCSSSNSQRRSPPTSKRDSD) are disordered. Positions 202 to 214 (CSSSNSQRRSPPT) are enriched in polar residues. ANK repeat units lie at residues 253 to 283 (RKTD…SGGD) and 306 to 333 (YTLV…QHAA). Residues 425–585 (LYALWNRTAG…RGHFSALVAM (161 aa)) form the OTU domain. Catalysis depends on Cys436, which acts as the Nucleophile. His578 (proton acceptor) is an active-site residue.

This sequence belongs to the peptidase C64 family.

The protein localises to the cytoplasm. The protein resides in the nucleus. It carries out the reaction Thiol-dependent hydrolysis of ester, thioester, amide, peptide and isopeptide bonds formed by the C-terminal Gly of ubiquitin (a 76-residue protein attached to proteins as an intracellular targeting signal).. Ubiquitin thioesterase, which specifically hydrolyzes 'Lys-29'-linked and 'Lys-33'-linked diubiquitin. Also cleaves 'Lys-63'-linked chains, but with 40-fold less efficiency compared to 'Lys-29'-linked ones. Positive regulator of the Wnt signaling pathway that deubiquitinates apc protein, a negative regulator of Wnt-mediated transcription. Acts as a regulator of autophagy by mediating deubiquitination of pik3c3/vps34, thereby promoting autophagosome maturation. Plays a role in the regulation of cell morphology and cytoskeletal organization. Required in the stress fiber dynamics and cell migration. The protein is Ubiquitin thioesterase zranb1 (zranb1) of Xenopus tropicalis (Western clawed frog).